The primary structure comprises 85 residues: uncharacterized protein (85 aa).

The span at 64–76 shows a compositional bias: basic and acidic residues; sequence DPPVRRSGGREQH. The segment at 64–85 is disordered; it reads DPPVRRSGGREQHLAQVWRATS.

This is an uncharacterized protein from Mycobacterium bovis (strain ATCC BAA-935 / AF2122/97).